The sequence spans 690 residues: Secreted LysM effector Vd5LysM (690 aa).

2 N-linked (GlcNAc...) asparagine glycosylation sites follow: Asn-4 and Asn-69. LysM domains follow at residues 203–248, 253–301, and 341–387; these read TQYT…SLCI, DTVT…TLCI, and RWYN…SYCV. N-linked (GlcNAc...) asparagine glycans are attached at residues Asn-260, Asn-295, Asn-375, Asn-410, Asn-423, and Asn-492. The disordered stretch occupies residues 523–546; sequence PATATTGDGGPTPPAPTHSGQPQD. Positions 549–596 constitute a LysM 4 domain; sequence TWHVVSSGDSCQSVADDAGISRDQFHDWNPAVGRDCSTNFWLGQAYCV. Over residues 606–619 the composition is skewed to low complexity; the sequence is STVASSTTSSVTPG. The disordered stretch occupies residues 606 to 636; it reads STVASSTTSSVTPGPSKPEPPGPTHTGQPSD. A LysM 5 domain is found at 639–686; sequence EWDVVETGDTCGSLAESNDISLSQFFDWNPAVSRDCVANFWIGQAYCI.

It belongs to the secreted LysM effector family.

In terms of biological role, might have a role in sequestration of chitin oligosaccharides (breakdown products of fungal cell walls that are released during invasion and act as triggers of host immunity) to dampen host defense. Does not play an important role during host colonization. This Verticillium dahliae (strain VdLs.17 / ATCC MYA-4575 / FGSC 10137) (Verticillium wilt) protein is Secreted LysM effector Vd5LysM.